Here is a 452-residue protein sequence, read N- to C-terminus: Cell division protein FtsZ (452 aa).

GTP is bound by residues 24-28 (GAGSN), 111-113 (GTG), Glu-142, Arg-146, and Asp-190.

The protein belongs to the FtsZ family. As to quaternary structure, homodimer. Polymerizes to form a dynamic ring structure in a strictly GTP-dependent manner. Interacts directly with several other division proteins.

The protein resides in the cytoplasm. Functionally, essential cell division protein that forms a contractile ring structure (Z ring) at the future cell division site. The regulation of the ring assembly controls the timing and the location of cell division. One of the functions of the FtsZ ring is to recruit other cell division proteins to the septum to produce a new cell wall between the dividing cells. Binds GTP and shows GTPase activity. In Rickettsia prowazekii (strain Madrid E), this protein is Cell division protein FtsZ.